Here is a 102-residue protein sequence, read N- to C-terminus: MVIGLSHYLTVSAILFTLGVFGIFLNRKNVIVILMSVELILLAVNINMVAFSHFLNDIVGQVFALFILTVAAAEAAIGLAILVVFYRNRGSIAVEDVNMMKG.

A run of 3 helical transmembrane segments spans residues 5-25 (LSHY…GIFL), 31-51 (IVIL…MVAF), and 65-85 (LFIL…LVVF).

This sequence belongs to the complex I subunit 4L family. In terms of assembly, NDH-1 is composed of 14 different subunits. Subunits NuoA, H, J, K, L, M, N constitute the membrane sector of the complex.

It is found in the cell inner membrane. The catalysed reaction is a quinone + NADH + 5 H(+)(in) = a quinol + NAD(+) + 4 H(+)(out). Functionally, NDH-1 shuttles electrons from NADH, via FMN and iron-sulfur (Fe-S) centers, to quinones in the respiratory chain. The immediate electron acceptor for the enzyme in this species is believed to be ubiquinone. Couples the redox reaction to proton translocation (for every two electrons transferred, four hydrogen ions are translocated across the cytoplasmic membrane), and thus conserves the redox energy in a proton gradient. In Rhizobium etli (strain ATCC 51251 / DSM 11541 / JCM 21823 / NBRC 15573 / CFN 42), this protein is NADH-quinone oxidoreductase subunit K 1.